The following is a 134-amino-acid chain: Protein dpy-30 homolog (134 aa).

Residues 1-81 (MEAKTDAPIS…ETNNMPTRQY (81 aa)) are disordered. A compositionally biased stretch (low complexity) spans 31–68 (AQANPTAAPGAPPSGAIAVGQSTNPVAQQQQQPAVAKK). Residues 71–81 (SETNNMPTRQY) are compositionally biased toward polar residues.

The protein belongs to the dpy-30 family. As to quaternary structure, core component of several methyltransferase-containing complexes. Component of the SET1 complex, composed at least of the catalytic subunit Set1, wds/WDR5, Wdr82, Rbbp5, ash2, Cfp1/CXXC1, hcf and Dpy-30L1. Component of the MLL3/4 complex composed at least of the catalytic subunit trr, ash2, Rbbp5, Dpy-30L1, wds, hcf, ptip, Pa1, Utx, Lpt and Ncoa6. As to expression, expressed in larval brain, gonad, imaginal disk and salivary gland and in adult brain, testis, ovary and salivary gland.

Its subcellular location is the nucleus. Component of the SET1 complex that specifically di- and trimethylates 'Lys-4' of histone H3 and of the MLL3/4 complex which also methylates histone H3 'Lys-4'. Inhibits MTF-1 transcription factor activity. In Drosophila melanogaster (Fruit fly), this protein is Protein dpy-30 homolog.